We begin with the raw amino-acid sequence, 306 residues long: 4-hydroxy-3-methylbut-2-enyl diphosphate reductase (306 aa).

C12 contacts [4Fe-4S] cluster. Residues H41 and H74 each coordinate (2E)-4-hydroxy-3-methylbut-2-enyl diphosphate. The dimethylallyl diphosphate site is built by H41 and H74. H41 and H74 together coordinate isopentenyl diphosphate. C96 provides a ligand contact to [4Fe-4S] cluster. Position 124 (H124) interacts with (2E)-4-hydroxy-3-methylbut-2-enyl diphosphate. Dimethylallyl diphosphate is bound at residue H124. H124 contributes to the isopentenyl diphosphate binding site. Catalysis depends on E126, which acts as the Proton donor. Residue T164 participates in (2E)-4-hydroxy-3-methylbut-2-enyl diphosphate binding. C194 contributes to the [4Fe-4S] cluster binding site. S222, S223, N224, and S266 together coordinate (2E)-4-hydroxy-3-methylbut-2-enyl diphosphate. The dimethylallyl diphosphate site is built by S222, S223, N224, and S266. Residues S222, S223, N224, and S266 each coordinate isopentenyl diphosphate.

It belongs to the IspH family. The cofactor is [4Fe-4S] cluster.

The enzyme catalyses isopentenyl diphosphate + 2 oxidized [2Fe-2S]-[ferredoxin] + H2O = (2E)-4-hydroxy-3-methylbut-2-enyl diphosphate + 2 reduced [2Fe-2S]-[ferredoxin] + 2 H(+). The catalysed reaction is dimethylallyl diphosphate + 2 oxidized [2Fe-2S]-[ferredoxin] + H2O = (2E)-4-hydroxy-3-methylbut-2-enyl diphosphate + 2 reduced [2Fe-2S]-[ferredoxin] + 2 H(+). It functions in the pathway isoprenoid biosynthesis; dimethylallyl diphosphate biosynthesis; dimethylallyl diphosphate from (2E)-4-hydroxy-3-methylbutenyl diphosphate: step 1/1. Its pathway is isoprenoid biosynthesis; isopentenyl diphosphate biosynthesis via DXP pathway; isopentenyl diphosphate from 1-deoxy-D-xylulose 5-phosphate: step 6/6. Its function is as follows. Catalyzes the conversion of 1-hydroxy-2-methyl-2-(E)-butenyl 4-diphosphate (HMBPP) into a mixture of isopentenyl diphosphate (IPP) and dimethylallyl diphosphate (DMAPP). Acts in the terminal step of the DOXP/MEP pathway for isoprenoid precursor biosynthesis. This Ruthia magnifica subsp. Calyptogena magnifica protein is 4-hydroxy-3-methylbut-2-enyl diphosphate reductase.